The sequence spans 204 residues: IMPACT family member YigZ (204 aa).

Belongs to the IMPACT family. In terms of assembly, monomer.

The protein is IMPACT family member YigZ (yigZ) of Escherichia coli (strain K12).